Reading from the N-terminus, the 472-residue chain is MAGGEAGVTLGQPHLSRQDLTTLDVTKLTPLSHEVISRQATINIGTIGHVAHGKSTVVKAISGVHTVRFKNELERNITIKLGYANAKIYKLDDPSCPRPECYRSCGSSTPDEFPTDIPGTKGNFKLVRHVSFVDCPGHDILMATMLNGAAVMDAALLLIAGNESCPQPQTSEHLAAIEIMKLKHILILQNKIDLVKESQAKEQYEQILAFVQGTVAEGAPIIPISAQLKYNIEVVCEYIVKKIPVPPRDFTSEPRLIVIRSFDVNKPGCEVDDLKGGVAGGSILKGVLKVGQEIEVRPGIVSKDSEGKLMCKPIFSKIVSLFAEHNDLQYAAPGGLIGVGTKIDPTLCRADRMVGQVLGAVGALPEIFTELEISYFLLRRLLGVRTEGDKKAAKVQKLSKNEVLMVNIGPLSTGGRVSAVKADLGKIVLTNPVCTEVGEKIALSRRVEKHWRLIGWGQIRRGVTIKPTVDDD.

Alanine 2 bears the N-acetylalanine mark. At serine 16 the chain carries Phosphoserine. Positions 39–248 (QATINIGTIG…IVKKIPVPPR (210 aa)) constitute a tr-type G domain. The G1 stretch occupies residues 48-55 (GHVAHGKS). 51-56 (AHGKST) provides a ligand contact to GTP. Residues 76–80 (NITIK) are G2. The G3 stretch occupies residues 134-137 (DCPG). GTP-binding positions include 190-193 (NKID) and 225-227 (SAQ). The G4 stretch occupies residues 190–193 (NKID). Residues 225–227 (SAQ) are G5. The interval 457–469 (GQIRRGVTIKPTV) is interacts with CDC123.

This sequence belongs to the TRAFAC class translation factor GTPase superfamily. Classic translation factor GTPase family. EIF2G subfamily. Eukaryotic translation initiation factor 2 eIF2 is a heterotrimeric complex composed of an alpha (EIF2S1), a beta (EIF2S2) and a gamma (EIF2S3) chain. eIF2 is member of the 43S pre-initiation complex (43S PIC). Interacts (via C-terminus) with CDC123; the interaction is direct.

Its subcellular location is the cytoplasm. The protein resides in the cytosol. The enzyme catalyses GTP + H2O = GDP + phosphate + H(+). In terms of biological role, member of the eIF2 complex that functions in the early steps of protein synthesis by forming a ternary complex with GTP and initiator tRNA. This complex binds to a 40S ribosomal subunit, followed by mRNA binding to form the 43S pre-initiation complex (43S PIC). Junction of the 60S ribosomal subunit to form the 80S initiation complex is preceded by hydrolysis of the GTP bound to eIF2 and release of an eIF2-GDP binary complex. In order for eIF2 to recycle and catalyze another round of initiation, the GDP bound to eIF2 must exchange with GTP by way of a reaction catalyzed by eIF-2B. This chain is Eukaryotic translation initiation factor 2 subunit 3 (EIF2S3), found in Pongo abelii (Sumatran orangutan).